The primary structure comprises 95 residues: Large ribosomal subunit protein bL25 (95 aa).

This sequence belongs to the bacterial ribosomal protein bL25 family. Part of the 50S ribosomal subunit; part of the 5S rRNA/L5/L18/L25 subcomplex. Contacts the 5S rRNA. Binds to the 5S rRNA independently of L5 and L18.

Functionally, this is one of the proteins that binds to the 5S RNA in the ribosome where it forms part of the central protuberance. In Shewanella sediminis (strain HAW-EB3), this protein is Large ribosomal subunit protein bL25.